Reading from the N-terminus, the 424-residue chain is Tyrosine--tRNA ligase (424 aa).

Y37 lines the L-tyrosine pocket. The 'HIGH' region signature appears at 42–51; sequence PTADSLHLGH. Residues Y175 and Q179 each coordinate L-tyrosine. Positions 235-239 match the 'KMSKS' region motif; sequence KFGKT. K238 contacts ATP. The S4 RNA-binding domain occupies 357–414; it reads ADLQQALVNAELVPSRGQARTMISSNAVAINGEKQSDPEYAFTDADRLFGRYTLLRRG.

This sequence belongs to the class-I aminoacyl-tRNA synthetase family. TyrS type 1 subfamily. As to quaternary structure, homodimer.

The protein resides in the cytoplasm. It catalyses the reaction tRNA(Tyr) + L-tyrosine + ATP = L-tyrosyl-tRNA(Tyr) + AMP + diphosphate + H(+). Its function is as follows. Catalyzes the attachment of tyrosine to tRNA(Tyr) in a two-step reaction: tyrosine is first activated by ATP to form Tyr-AMP and then transferred to the acceptor end of tRNA(Tyr). The chain is Tyrosine--tRNA ligase from Yersinia enterocolitica serotype O:8 / biotype 1B (strain NCTC 13174 / 8081).